We begin with the raw amino-acid sequence, 469 residues long: Acetyl-CoA decarbonylase/synthase complex subunit beta 1 (469 aa).

Cysteine 189, cysteine 192, cysteine 278, and cysteine 280 together coordinate [Ni-Fe-S] cluster.

This sequence belongs to the CdhC family. As to quaternary structure, monomer. The ACDS complex is made up of alpha, epsilon, beta, gamma and delta chains with a probable stoichiometry of (alpha(2)epsilon(2))(4)-beta(8)-(gamma(1)delta(1))(8) (Potential). It depends on [Ni-Fe-S] cluster as a cofactor.

The catalysed reaction is Co(I)-[corrinoid Fe-S protein] + acetyl-CoA + H(+) = methyl-Co(III)-[corrinoid Fe-S protein] + CO + CoA. It participates in one-carbon metabolism; methanogenesis from acetate. Functionally, part of a complex that catalyzes the reversible cleavage of acetyl-CoA, allowing growth on acetate as sole source of carbon and energy. The alpha-epsilon complex generates CO from CO(2), while the beta subunit (this protein) combines the CO with CoA and a methyl group to form acetyl-CoA. The methyl group, which is incorporated into acetyl-CoA, is transferred to the beta subunit by a corrinoid iron-sulfur protein (the gamma-delta complex). The polypeptide is Acetyl-CoA decarbonylase/synthase complex subunit beta 1 (cdhC1) (Methanosarcina acetivorans (strain ATCC 35395 / DSM 2834 / JCM 12185 / C2A)).